The primary structure comprises 694 residues: Elongation factor G (694 aa).

The 275-residue stretch at 11-285 (KDYRNIGIMA…AVIDYLPSPL (275 aa)) folds into the tr-type G domain. GTP-binding positions include 20 to 27 (AHIDAGKT), 84 to 88 (DTPGH), and 138 to 141 (NKMD).

Belongs to the TRAFAC class translation factor GTPase superfamily. Classic translation factor GTPase family. EF-G/EF-2 subfamily.

It localises to the cytoplasm. Functionally, catalyzes the GTP-dependent ribosomal translocation step during translation elongation. During this step, the ribosome changes from the pre-translocational (PRE) to the post-translocational (POST) state as the newly formed A-site-bound peptidyl-tRNA and P-site-bound deacylated tRNA move to the P and E sites, respectively. Catalyzes the coordinated movement of the two tRNA molecules, the mRNA and conformational changes in the ribosome. In Mycoplasma mobile (strain ATCC 43663 / 163K / NCTC 11711) (Mesomycoplasma mobile), this protein is Elongation factor G.